The chain runs to 37 residues: Large ribosomal subunit protein bL36c (37 aa).

This sequence belongs to the bacterial ribosomal protein bL36 family.

The protein localises to the plastid. It is found in the chloroplast. The sequence is that of Large ribosomal subunit protein bL36c from Oltmannsiellopsis viridis (Marine flagellate).